Consider the following 270-residue polypeptide: Phosphatidylglycerol--prolipoprotein diacylglyceryl transferase (270 aa).

7 consecutive transmembrane segments (helical) span residues 17-37 (LAIRWYGLMYLAGFIMFLWFG), 59-79 (MLFYGVLGVILGGRLGYVLFY), 95-115 (WEGGMAFHGGFLGVLIAMWVF), 129-149 (FIAPMIPCGLAAGRIGNFING), 175-195 (PSQLYQFAGEGVALFIILWLF), 202-222 (MGAVSGVFLIGYGAFRFLAEF), and 237-257 (LSMGQWLSLPMIVIGAVMVVW). R142 provides a ligand contact to a 1,2-diacyl-sn-glycero-3-phospho-(1'-sn-glycerol).

The protein belongs to the Lgt family.

It is found in the cell inner membrane. The catalysed reaction is L-cysteinyl-[prolipoprotein] + a 1,2-diacyl-sn-glycero-3-phospho-(1'-sn-glycerol) = an S-1,2-diacyl-sn-glyceryl-L-cysteinyl-[prolipoprotein] + sn-glycerol 1-phosphate + H(+). It participates in protein modification; lipoprotein biosynthesis (diacylglyceryl transfer). Catalyzes the transfer of the diacylglyceryl group from phosphatidylglycerol to the sulfhydryl group of the N-terminal cysteine of a prolipoprotein, the first step in the formation of mature lipoproteins. The polypeptide is Phosphatidylglycerol--prolipoprotein diacylglyceryl transferase (Cupriavidus metallidurans (strain ATCC 43123 / DSM 2839 / NBRC 102507 / CH34) (Ralstonia metallidurans)).